An 89-amino-acid chain; its full sequence is Small ribosomal subunit protein uS15 (89 aa).

The protein belongs to the universal ribosomal protein uS15 family. As to quaternary structure, part of the 30S ribosomal subunit. Forms a bridge to the 50S subunit in the 70S ribosome, contacting the 23S rRNA.

One of the primary rRNA binding proteins, it binds directly to 16S rRNA where it helps nucleate assembly of the platform of the 30S subunit by binding and bridging several RNA helices of the 16S rRNA. Its function is as follows. Forms an intersubunit bridge (bridge B4) with the 23S rRNA of the 50S subunit in the ribosome. This chain is Small ribosomal subunit protein uS15, found in Dinoroseobacter shibae (strain DSM 16493 / NCIMB 14021 / DFL 12).